The chain runs to 1298 residues: Phosphoribosylformylglycinamidine synthase (1298 aa).

The interval 298 to 328 (TAIAPFPGASTGSGGEIRDEGATGRGAKPKA) is disordered. Residues 305–316 (GASTGSGGEIRD), 384–386 (TGY), and Ala-676 each bind ATP. Residues Asp-677, Glu-716, Asn-720, and Asp-884 each coordinate Mg(2+). Position 886 (Ser-886) interacts with ATP. A Glutamine amidotransferase type-1 domain is found at 1045 to 1298 (VAILREQGVN…MFRNARVWVD (254 aa)). The active-site Nucleophile is the Cys-1138. Residues His-1263 and Glu-1265 contribute to the active site.

This sequence in the N-terminal section; belongs to the FGAMS family. As to quaternary structure, monomer.

The protein localises to the cytoplasm. It catalyses the reaction N(2)-formyl-N(1)-(5-phospho-beta-D-ribosyl)glycinamide + L-glutamine + ATP + H2O = 2-formamido-N(1)-(5-O-phospho-beta-D-ribosyl)acetamidine + L-glutamate + ADP + phosphate + H(+). It functions in the pathway purine metabolism; IMP biosynthesis via de novo pathway; 5-amino-1-(5-phospho-D-ribosyl)imidazole from N(2)-formyl-N(1)-(5-phospho-D-ribosyl)glycinamide: step 1/2. Phosphoribosylformylglycinamidine synthase involved in the purines biosynthetic pathway. Catalyzes the ATP-dependent conversion of formylglycinamide ribonucleotide (FGAR) and glutamine to yield formylglycinamidine ribonucleotide (FGAM) and glutamate. This is Phosphoribosylformylglycinamidine synthase from Pseudomonas aeruginosa (strain ATCC 15692 / DSM 22644 / CIP 104116 / JCM 14847 / LMG 12228 / 1C / PRS 101 / PAO1).